The primary structure comprises 167 residues: Piercer of microtubule wall 1 protein (167 aa).

Positions 1 to 54 are disordered; sequence MSEEKPQQSAEEPEPGEPKAKPAPEEPEPGEPKAKPAPEEPEPGEPKAKPAPEK. Positions 16–54 are enriched in basic and acidic residues; the sequence is GEPKAKPAPEEPEPGEPKAKPAPEEPEPGEPKAKPAPEK.

It belongs to the PIERCE1 family. As to quaternary structure, microtubule inner protein component of sperm flagellar doublet microtubules. Interacts with CFAP53, ODAD1 and ODAD3; the interactions link the outer dynein arms docking complex (ODA-DC) to the internal microtubule inner proteins (MIP) in cilium axoneme. As to expression, expressed in brain, lung, kidney and testis.

Its subcellular location is the cytoplasm. It is found in the cytoskeleton. It localises to the cilium axoneme. The protein resides in the flagellum axoneme. In terms of biological role, microtubule inner protein involved in the attachment of outer dynein arms (ODAs) to dynein-decorated doublet microtubules (DMTs) in cilia axoneme. Functions at the initial step of left-right asymmetry specification of the visceral organs. This Mus musculus (Mouse) protein is Piercer of microtubule wall 1 protein.